A 249-amino-acid chain; its full sequence is DNA repair protein RecO (249 aa).

This sequence belongs to the RecO family.

Functionally, involved in DNA repair and RecF pathway recombination. The polypeptide is DNA repair protein RecO (Solidesulfovibrio magneticus (strain ATCC 700980 / DSM 13731 / RS-1) (Desulfovibrio magneticus)).